The primary structure comprises 341 residues: Glycerol-3-phosphate dehydrogenase [NAD(P)+] (341 aa).

Residues serine 14, phenylalanine 15, arginine 35, and lysine 108 each coordinate NADPH. Lysine 108 and glycine 136 together coordinate sn-glycerol 3-phosphate. Alanine 140 provides a ligand contact to NADPH. Sn-glycerol 3-phosphate contacts are provided by lysine 191, aspartate 244, serine 254, arginine 255, and asparagine 256. Lysine 191 acts as the Proton acceptor in catalysis. Arginine 255 is a binding site for NADPH. Valine 279 and glutamate 281 together coordinate NADPH.

Belongs to the NAD-dependent glycerol-3-phosphate dehydrogenase family.

It localises to the cytoplasm. The catalysed reaction is sn-glycerol 3-phosphate + NAD(+) = dihydroxyacetone phosphate + NADH + H(+). The enzyme catalyses sn-glycerol 3-phosphate + NADP(+) = dihydroxyacetone phosphate + NADPH + H(+). It participates in membrane lipid metabolism; glycerophospholipid metabolism. In terms of biological role, catalyzes the reduction of the glycolytic intermediate dihydroxyacetone phosphate (DHAP) to sn-glycerol 3-phosphate (G3P), the key precursor for phospholipid synthesis. In Pseudomonas putida (strain ATCC 700007 / DSM 6899 / JCM 31910 / BCRC 17059 / LMG 24140 / F1), this protein is Glycerol-3-phosphate dehydrogenase [NAD(P)+].